The primary structure comprises 783 residues: BMP/retinoic acid-inducible neural-specific protein 2 (783 aa).

Residues 1 to 33 (MRWQCGTRFRGLRPVVAPWTALLALGLPGWVLA) form the signal peptide. The 197-residue stretch at 85–281 (RYRIYREFAR…FVAAALSYIT (197 aa)) folds into the MACPF domain. Asn185, Asn354, Asn473, Asn579, Asn626, and Asn658 each carry an N-linked (GlcNAc...) asparagine glycan.

Belongs to the BRINP family.

Its subcellular location is the secreted. Inhibits neuronal cell proliferation by negative regulation of the cell cycle transition. The chain is BMP/retinoic acid-inducible neural-specific protein 2 (BRINP2) from Pongo abelii (Sumatran orangutan).